We begin with the raw amino-acid sequence, 722 residues long: Exocyst complex component 3-like protein 4 (722 aa).

Disordered stretches follow at residues 1–53 (MPSP…LGSL) and 92–131 (NDGP…KPEA). Over residues 34–46 (SRKEPNAHRKDGT) the composition is skewed to basic and acidic residues. Position 52 is a phosphoserine (Ser-52). The span at 113–122 (GVSQQASTGA) shows a compositional bias: polar residues. Position 513 is a phosphoserine (Ser-513).

This sequence belongs to the SEC6 family.

In Homo sapiens (Human), this protein is Exocyst complex component 3-like protein 4 (EXOC3L4).